A 196-amino-acid polypeptide reads, in one-letter code: Protein LSM12 homolog A (196 aa).

The 71-residue stretch at 3–73 (APGPGEYFSV…VSEVDIINDR (71 aa)) folds into the Sm domain. The region spanning 81-175 (ASLNISKLAN…IVEKHFRDVE (95 aa)) is the AD domain. The segment at 174 to 196 (VESQKTMQRSQAQQTQKDSSLSS) is disordered. The span at 177–196 (QKTMQRSQAQQTQKDSSLSS) shows a compositional bias: polar residues.

It belongs to the LSM12 family.

This is Protein LSM12 homolog A (lsm12a) from Danio rerio (Zebrafish).